The following is a 769-amino-acid chain: Neutral alpha-glucosidase C (769 aa).

Asp-366 acts as the Nucleophile in catalysis. Glu-369 is a catalytic residue. Asp-442 (proton donor) is an active-site residue.

It belongs to the glycosyl hydrolase 31 family.

The catalysed reaction is Hydrolysis of terminal, non-reducing (1-&gt;4)-linked alpha-D-glucose residues with release of alpha-D-glucose.. Functionally, has alpha-glucosidase activity. The sequence is that of Neutral alpha-glucosidase C (GANC) from Macaca fascicularis (Crab-eating macaque).